The primary structure comprises 339 residues: 2-deoxy-scyllo-inosamine dehydrogenase (339 aa).

The Zn(2+) site is built by C37, H59, C88, C91, C94, C102, and E143.

The protein belongs to the zinc-containing alcohol dehydrogenase family. DOIA dehydrogenase subfamily. It depends on Zn(2+) as a cofactor.

It carries out the reaction 2-deoxy-scyllo-inosamine + NADP(+) = 3-amino-2,3-dideoxy-scyllo-inosose + NADPH + H(+). The catalysed reaction is 2-deoxy-scyllo-inosamine + NAD(+) = 3-amino-2,3-dideoxy-scyllo-inosose + NADH + H(+). It functions in the pathway metabolic intermediate biosynthesis; 2-deoxystreptamine biosynthesis; 2-deoxystreptamine from D-glucose 6-phosphate: step 3/4. It participates in antibiotic biosynthesis; tobramycin biosynthesis. Functionally, catalyzes the oxidation of 2-deoxy-scyllo-inosamine (DOIA) with NAD(+) or NADP(+), forming 3-amino-2,3-dideoxy-scyllo-inosose (amino-DOI). In Streptoalloteichus tenebrarius (strain ATCC 17920 / DSM 40477 / JCM 4838 / CBS 697.72 / NBRC 16177 / NCIMB 11028 / NRRL B-12390 / A12253. 1 / ISP 5477) (Streptomyces tenebrarius), this protein is 2-deoxy-scyllo-inosamine dehydrogenase (tobE).